The primary structure comprises 446 residues: Tubulin beta-2 chain (446 aa).

Residues Q11, E69, S138, G142, T143, G144, N204, and N226 each coordinate GTP. Residue E69 participates in Mg(2+) binding.

The protein belongs to the tubulin family. Dimer of alpha and beta chains. A typical microtubule is a hollow water-filled tube with an outer diameter of 25 nm and an inner diameter of 15 nM. Alpha-beta heterodimers associate head-to-tail to form protofilaments running lengthwise along the microtubule wall with the beta-tubulin subunit facing the microtubule plus end conferring a structural polarity. Microtubules usually have 13 protofilaments but different protofilament numbers can be found in some organisms and specialized cells. The cofactor is Mg(2+).

Its subcellular location is the cytoplasm. It localises to the cytoskeleton. Tubulin is the major constituent of microtubules, a cylinder consisting of laterally associated linear protofilaments composed of alpha- and beta-tubulin heterodimers. Microtubules grow by the addition of GTP-tubulin dimers to the microtubule end, where a stabilizing cap forms. Below the cap, tubulin dimers are in GDP-bound state, owing to GTPase activity of alpha-tubulin. The chain is Tubulin beta-2 chain (tub2) from Hypocrea rufa (Trichoderma viride).